Reading from the N-terminus, the 683-residue chain is Transforming growth factor-beta-induced protein ig-h3 (683 aa).

A signal peptide spans 1 to 23 (MALLGRLLPLALALALGPAATPA). At Ser37 the chain carries Phosphoserine. One can recognise an EMI domain in the interval 45 to 99 (GPNVCAVQKLIGTNKKYFTNCKQWYQRKICGKSTVISYECCPGYEKVPGEKGCPA). Disulfide bonds link Cys49–Cys85, Cys74–Cys339, Cys84–Cys97, Cys214–Cys317, and Cys473–Cys478. Cys65 carries the post-translational modification S-cysteinyl cysteine. FAS1 domains are found at residues 103 to 236 (LSNL…DKVI), 240 to 371 (TNNI…DELL), 375 to 498 (SAKT…DRML), and 502 to 632 (MGTV…SSVL). The Cell attachment site motif lies at 642-644 (RGD).

In terms of assembly, binds to type I, II, and IV collagens. Post-translationally, gamma-carboxylation is controversial. Gamma-carboxyglutamated; gamma-carboxyglutamate residues are formed by vitamin K dependent carboxylation; this may be required for calcium binding. According to a more recent report, does not contain vitamin K-dependent gamma-carboxyglutamate residues. The EMI domain contains 2 expected intradomain disulfide bridges (Cys-49-Cys85 and Cys-84-Cys-97) and one unusual interdomain disulfide bridge to the second FAS1 domain (Cys-74-Cys-339). This arrangement violates the predicted disulfide bridge pattern of an EMI domain.

The protein resides in the secreted. It localises to the extracellular space. The protein localises to the extracellular matrix. Its function is as follows. Plays a role in cell adhesion. May play a role in cell-collagen interactions. This chain is Transforming growth factor-beta-induced protein ig-h3 (TGFBI), found in Bos taurus (Bovine).